Reading from the N-terminus, the 262-residue chain is NAD-dependent protein deacylase (262 aa).

The Deacetylase sirtuin-type domain occupies 1–262 (MSNLRRAAEA…AALSPPGVPT (262 aa)). 22–42 (GAGISADSGIPTFRDKLTGLW) serves as a coordination point for NAD(+). The substrate site is built by tyrosine 67 and arginine 70. 101–104 (QNID) serves as a coordination point for NAD(+). The Proton acceptor role is filled by histidine 119. Zn(2+) contacts are provided by cysteine 127, cysteine 130, cysteine 155, and cysteine 158. NAD(+) contacts are provided by residues 195 to 197 (GTS), 221 to 223 (NLE), and alanine 239.

This sequence belongs to the sirtuin family. Class III subfamily. The cofactor is Zn(2+).

The protein resides in the cytoplasm. It catalyses the reaction N(6)-acetyl-L-lysyl-[protein] + NAD(+) + H2O = 2''-O-acetyl-ADP-D-ribose + nicotinamide + L-lysyl-[protein]. The enzyme catalyses N(6)-succinyl-L-lysyl-[protein] + NAD(+) + H2O = 2''-O-succinyl-ADP-D-ribose + nicotinamide + L-lysyl-[protein]. Its function is as follows. NAD-dependent lysine deacetylase and desuccinylase that specifically removes acetyl and succinyl groups on target proteins. Modulates the activities of several proteins which are inactive in their acylated form. This is NAD-dependent protein deacylase from Pseudomonas putida (strain ATCC 47054 / DSM 6125 / CFBP 8728 / NCIMB 11950 / KT2440).